The sequence spans 456 residues: Aromatic amino acid transport protein AroP (456 aa).

Topologically, residues M1–H18 are cytoplasmic. The chain crosses the membrane as a helical span at residues I19–V39. The Periplasmic segment spans residues I40 to Q41. The chain crosses the membrane as a helical span at residues S42–M62. Residues R63–Y85 are Cytoplasmic-facing. A helical membrane pass occupies residues W86–A106. Residues M107–Y116 are Periplasmic-facing. The chain crosses the membrane as a helical span at residues I117–I137. Residues N138–W154 are Cytoplasmic-facing. Residues F155–F175 traverse the membrane as a helical segment. Over S176 to T200 the chain is Periplasmic. Residues G201–I221 traverse the membrane as a helical segment. The Cytoplasmic segment spans residues T222–Q239. A helical membrane pass occupies residues V240–P260. Residues W261–P270 lie on the Periplasmic side of the membrane. A helical transmembrane segment spans residues F271 to V291. Over L292 to P332 the chain is Cytoplasmic. A helical transmembrane segment spans residues V333–A353. Over P354–A357 the chain is Periplasmic. Residues F358 to L378 traverse the membrane as a helical segment. At A379–A398 the chain is on the cytoplasmic side. A helical membrane pass occupies residues L399 to M419. Residues L420–G424 lie on the Periplasmic side of the membrane. Residues M425–F445 traverse the membrane as a helical segment. The Cytoplasmic portion of the chain corresponds to K446–H456.

Belongs to the amino acid-polyamine-organocation (APC) superfamily. Amino acid transporter (AAT) (TC 2.A.3.1) family.

Its subcellular location is the cell inner membrane. The enzyme catalyses L-phenylalanine(in) + H(+)(in) = L-phenylalanine(out) + H(+)(out). It catalyses the reaction L-tryptophan(in) + H(+)(in) = L-tryptophan(out) + H(+)(out). The catalysed reaction is L-tyrosine(in) + H(+)(in) = L-tyrosine(out) + H(+)(out). Functionally, permease that is involved in the active transport across the cytoplasmic membrane of all three aromatic amino acids, phenylalanine, tyrosine and tryptophan. This Escherichia coli O6:H1 (strain CFT073 / ATCC 700928 / UPEC) protein is Aromatic amino acid transport protein AroP (aroP).